The chain runs to 184 residues: ATP synthase subunit b, chloroplastic (184 aa).

The chain crosses the membrane as a helical span at residues Leu-27–Leu-49.

It belongs to the ATPase B chain family. In terms of assembly, F-type ATPases have 2 components, F(1) - the catalytic core - and F(0) - the membrane proton channel. F(1) has five subunits: alpha(3), beta(3), gamma(1), delta(1), epsilon(1). F(0) has four main subunits: a(1), b(1), b'(1) and c(10-14). The alpha and beta chains form an alternating ring which encloses part of the gamma chain. F(1) is attached to F(0) by a central stalk formed by the gamma and epsilon chains, while a peripheral stalk is formed by the delta, b and b' chains.

It localises to the plastid. Its subcellular location is the chloroplast thylakoid membrane. F(1)F(0) ATP synthase produces ATP from ADP in the presence of a proton or sodium gradient. F-type ATPases consist of two structural domains, F(1) containing the extramembraneous catalytic core and F(0) containing the membrane proton channel, linked together by a central stalk and a peripheral stalk. During catalysis, ATP synthesis in the catalytic domain of F(1) is coupled via a rotary mechanism of the central stalk subunits to proton translocation. Its function is as follows. Component of the F(0) channel, it forms part of the peripheral stalk, linking F(1) to F(0). This is ATP synthase subunit b, chloroplastic from Aethionema cordifolium (Lebanon stonecress).